The following is a 320-amino-acid chain: Olfactory receptor 51E2 (320 aa).

The Extracellular segment spans residues 1 to 24; the sequence is MSSCNFTHATFVLIGIPGLEKAHF. N-linked (GlcNAc...) asparagine glycosylation is present at N5. The helical transmembrane segment at 25 to 45 threads the bilayer; the sequence is WVGFPLLSMYVVAMFGNCIVV. At 46–53 the chain is on the cytoplasmic side; it reads FIVRTERS. A helical membrane pass occupies residues 54–74; that stretch reads LHAPMYLFLCMLAAIDLALST. Residues 75–98 are Extracellular-facing; that stretch reads STMPKILALFWFDSREISFEACLT. Cysteines 96 and 178 form a disulfide. A helical transmembrane segment spans residues 99 to 119; sequence QMFFIHALSAIESTILLAMAF. Residues 120–138 are Cytoplasmic-facing; that stretch reads DRYVAICHPLRHAAVLNNT. The chain crosses the membrane as a helical span at residues 139-159; sequence VTAQIGIVAVVRGSLFFFPLP. Residues 160-195 are Extracellular-facing; sequence LLIKRLAFCHSNVLSHSYCVHQDVMKLAYADTLPNV. A helical membrane pass occupies residues 196–216; it reads VYGLTAILLVMGVDVMFISLS. Over 217–236 the chain is Cytoplasmic; it reads YFLIIRTVLQLPSKSERAKA. The helical transmembrane segment at 237–257 threads the bilayer; that stretch reads FGTCVSHIGVVLAFYVPLIGL. At 258–272 the chain is on the extracellular side; that stretch reads SVVHRFGNSLHPIVR. The chain crosses the membrane as a helical span at residues 273–293; the sequence is VVMGDIYLLLPPVINPIIYGA. The Cytoplasmic segment spans residues 294–320; it reads KTKQIRTRVLAMFKISCDKDLQAVGGK.

Belongs to the G-protein coupled receptor 1 family. In terms of tissue distribution, highly expressed in the prostate. Also expressed in spleen, liver, olfactory epithelium, retinal pigment epithelium and medulla oblongata. In the retinal pigment epithelium expression is restricted to the pigment cells and choroid (at protein level). Expressed in epidermal melanocytes (at protein level).

It is found in the cell membrane. The protein localises to the early endosome membrane. Functionally, olfactory receptor. Activated by the odorant, beta-ionone, a synthetic terpenoid. The activity of this receptor is probably mediated by G-proteins leading to the elevation of intracellular Ca(2+), cAMP and activation of the protein kinases PKA and MAPK3/MAPK1. Stimulation of OR51E2 by beta-ionone affects melanocyte proliferation, differentiation, and melanogenesis. Activation of OR51E2 by beta-ionone increases proliferation and migration of primary retinal pigment epithelial (RPE) cells. Activated also by the short-chain fatty acids (SCFA) acetate and propionate. In response to SCFA, may positively regulate renin secretion and increase blood pressure. May also be activated by steroid hormones and regulate cell proliferation. Activated by L-lactate in glomus cells. In Homo sapiens (Human), this protein is Olfactory receptor 51E2.